The primary structure comprises 173 residues: Photosystem I assembly protein Ycf3 (173 aa).

3 TPR repeats span residues 35–68 (AFAY…EEDP), 72–105 (AFIL…NAKM), and 120–153 (GSIA…APNN).

It belongs to the Ycf3 family.

It is found in the cellular thylakoid membrane. Its function is as follows. Essential for the assembly of the photosystem I (PSI) complex. May act as a chaperone-like factor to guide the assembly of the PSI subunits. The protein is Photosystem I assembly protein Ycf3 of Synechococcus sp. (strain RCC307).